A 592-amino-acid chain; its full sequence is Calnexin (592 aa).

The first 20 residues, 1-20, serve as a signal peptide directing secretion; the sequence is MEGKWLLCMLLVLGTAIVEA. The Lumenal segment spans residues 21–481; it reads HDGHDDDVID…QMIEAAEERP (461 aa). Residues serine 74 and aspartate 117 each contribute to the Ca(2+) site. The residue at position 137 (lysine 137) is an N6-acetyllysine. Cysteine 160 and cysteine 194 are oxidised to a cystine. Residues tyrosine 164, lysine 166, tyrosine 185, and aspartate 192 each coordinate an alpha-D-glucoside. Residues 260 to 345 form a disordered region; the sequence is GNLLNDMTPP…AEKPEDWDED (86 aa). Residues 274–319 show a composition bias toward basic and acidic residues; that stretch reads REIEDPEDRKPEDWDERPKIPDPEAVKPDDWDEDAPAKIPDEEATK. The p domain (Extended arm) stretch occupies residues 276 to 409; the sequence is IEDPEDRKPE…RKIPNPDFFE (134 aa). A run of 5 repeats spans residues 278–290, 295–307, 314–326, 333–345, and 348–358. 2 4 X approximate repeats regions span residues 278 to 345 and 348 to 405; these read DPED…WDED and GEWE…IPNP. Positions 323–345 are enriched in acidic residues; that stretch reads WLDDEPEYVPDPDAEKPEDWDED. Residues 326-359 form an interaction with PPIB region; that stretch reads DEPEYVPDPDAEKPEDWDEDMDGEWEAPQIANPK. Cysteine 360 and cysteine 366 are joined by a disulfide. 3 tandem repeats follow at residues 367–377, 381–391, and 395–405. Glutamate 425 lines the an alpha-D-glucoside pocket. Aspartate 436 contributes to the Ca(2+) binding site. Residues 482–502 traverse the membrane as a helical segment; it reads WLWVVYILTVALPVFLVILFC. Residues cysteine 502 and cysteine 503 are each lipidated (S-palmitoyl cysteine). Topologically, residues 503–592 are cytoplasmic; sequence CSGKKQTSAM…SPRNRKPRRE (90 aa). A sufficient to mediate interaction with SGIP1 region spans residues 503-592; sequence CSGKKQTSAM…SPRNRKPRRE (90 aa). Positions 511 to 592 are disordered; sequence AMEYKKTDAP…SPRNRKPRRE (82 aa). Residues 525 to 547 are compositionally biased toward acidic residues; sequence KEEEEEKEEEKDKGDEEEEGEEK. Serine 554 is subject to Phosphoserine. Threonine 562 is subject to Phosphothreonine. Serine 564 is subject to Phosphoserine; by MAPK3. Serine 583 carries the post-translational modification Phosphoserine.

This sequence belongs to the calreticulin family. Interacts with MAPK3/ERK1. Interacts with KCNH2. Associates with ribosomes. Interacts with SGIP1; involved in negative regulation of endocytosis. The palmitoylated form interacts with the ribosome-translocon complex component SSR1, promoting efficient folding of glycoproteins. Interacts with SERPINA2P/SERPINA2 and with the S and Z variants of SERPINA1. Interacts with PPIB. Interacts with ZNRF4. Interacts with SMIM22. Interacts with TMX2. Interacts with TMEM35A/NACHO and CHRNA7. Interacts with reticulophagy regulators RETREG2 and RETREG3. Interacts with DNM1L; may form part of a larger protein complex at the ER-mitochondrial interface during mitochondrial fission. Interacts with ADAM7. Post-translationally, phosphorylated at Ser-564 by MAPK3/ERK1. Phosphorylation by MAPK3/ERK1 increases its association with ribosomes. Palmitoylation by DHHC6 leads to the preferential localization to the perinuclear rough ER. It mediates the association of calnexin with the ribosome-translocon complex (RTC) which is required for efficient folding of glycosylated proteins. In terms of processing, ubiquitinated, leading to proteasomal degradation. Probably ubiquitinated by ZNRF4.

It localises to the endoplasmic reticulum membrane. The protein localises to the mitochondrion membrane. Its subcellular location is the melanosome membrane. Functionally, calcium-binding protein that interacts with newly synthesized monoglucosylated glycoproteins in the endoplasmic reticulum. It may act in assisting protein assembly and/or in the retention within the ER of unassembled protein subunits. It seems to play a major role in the quality control apparatus of the ER by the retention of incorrectly folded proteins. Associated with partial T-cell antigen receptor complexes that escape the ER of immature thymocytes, it may function as a signaling complex regulating thymocyte maturation. Additionally it may play a role in receptor-mediated endocytosis at the synapse. The protein is Calnexin (CANX) of Pongo abelii (Sumatran orangutan).